The sequence spans 130 residues: Small ribosomal subunit protein uS8 (130 aa).

The protein belongs to the universal ribosomal protein uS8 family. In terms of assembly, part of the 30S ribosomal subunit. Contacts proteins S5 and S12.

Functionally, one of the primary rRNA binding proteins, it binds directly to 16S rRNA central domain where it helps coordinate assembly of the platform of the 30S subunit. This chain is Small ribosomal subunit protein uS8, found in Cellvibrio japonicus (strain Ueda107) (Pseudomonas fluorescens subsp. cellulosa).